The following is a 238-amino-acid chain: RNA-binding protein pno1 (238 aa).

The 50-residue stretch at 162-211 folds into the KH domain; it reads QSRAIGRLAGKGGRTKFTIENVTKTRIVLADSKIHILGSYQNIQLARRAI.

It belongs to the PNO1 family.

Its subcellular location is the nucleus. The protein localises to the nucleolus. The sequence is that of RNA-binding protein pno1 (l(1)G0004) from Drosophila pseudoobscura pseudoobscura (Fruit fly).